Here is a 510-residue protein sequence, read N- to C-terminus: Zinc metalloproteinase (510 aa).

The signal sequence occupies residues 1 to 24 (MKSKLICIIMVIAFQAHFTMTVKA). The propeptide occupies 25–200 (DSVGEEKLQN…ILKKQNMLSE (176 aa)). A Zn(2+)-binding site is contributed by H349. Residue E350 is part of the active site. 2 residues coordinate Zn(2+): H353 and E373. H437 serves as the catalytic Proton donor.

It belongs to the peptidase M4 family. It depends on Zn(2+) as a cofactor.

It localises to the secreted. Its function is as follows. Probably linked to the pathogenesis of listerial infection. This is Zinc metalloproteinase (mpl) from Listeria monocytogenes serovar 1/2a (strain ATCC BAA-679 / EGD-e).